Reading from the N-terminus, the 371-residue chain is Poly(rC)-binding protein 3 (371 aa).

3 consecutive KH domains span residues 45 to 95 (TLTI…TITG), 129 to 182 (PVTL…TISG), and 293 to 357 (ASTH…QYLI).

Widely expressed, with highest levels in testis and fat tissues and lowest in heart.

It is found in the cytoplasm. Functionally, single-stranded nucleic acid binding protein that binds preferentially to oligo dC. This Mus musculus (Mouse) protein is Poly(rC)-binding protein 3 (Pcbp3).